Consider the following 179-residue polypeptide: Ribosome maturation factor RimM (179 aa).

The PRC barrel domain occupies 100 to 176; the sequence is KEEFHLLELI…FLIINPPNGL (77 aa).

This sequence belongs to the RimM family. In terms of assembly, binds ribosomal protein uS19.

The protein localises to the cytoplasm. Its function is as follows. An accessory protein needed during the final step in the assembly of 30S ribosomal subunit, possibly for assembly of the head region. Essential for efficient processing of 16S rRNA. May be needed both before and after RbfA during the maturation of 16S rRNA. It has affinity for free ribosomal 30S subunits but not for 70S ribosomes. The chain is Ribosome maturation factor RimM from Prochlorococcus marinus (strain AS9601).